The chain runs to 460 residues: Glycogen synthase (460 aa).

Lys15 provides a ligand contact to ADP-alpha-D-glucose.

It belongs to the glycosyltransferase 1 family. Bacterial/plant glycogen synthase subfamily.

It carries out the reaction [(1-&gt;4)-alpha-D-glucosyl](n) + ADP-alpha-D-glucose = [(1-&gt;4)-alpha-D-glucosyl](n+1) + ADP + H(+). It functions in the pathway glycan biosynthesis; glycogen biosynthesis. Functionally, synthesizes alpha-1,4-glucan chains using ADP-glucose. The chain is Glycogen synthase from Trichodesmium erythraeum (strain IMS101).